Here is a 738-residue protein sequence, read N- to C-terminus: Putative cyclic nucleotide-gated ion channel 7 (738 aa).

Over 1–104 the chain is Cytoplasmic; sequence MYKSQYISGQ…DKTLLVWNRL (104 aa). The chain crosses the membrane as a helical span at residues 105–125; that stretch reads FVISCILAVSVDPLFFYLPIV. At 126–139 the chain is on the extracellular side; sequence DNSGSSCIGIDTKL. Residues 140 to 160 form a helical membrane-spanning segment; that stretch reads AVTTTTLRTIVDVFYLTRMAL. Residues 161–193 lie on the Cytoplasmic side of the membrane; it reads QFRTAYIAPSSRVFGRGELVIDPAKIAERYLTR. A helical transmembrane segment spans residues 194-214; it reads YFVVDFLAVLPLPQIAVWKFL. The Extracellular segment spans residues 215–227; that stretch reads HGSKGSDVLPTKT. The helical transmembrane segment at 228-248 threads the bilayer; the sequence is ALLNIVIVQYIPRFVRFIPLT. Topologically, residues 249-268 are cytoplasmic; the sequence is SELKKTAGAFAEGAWAGAAY. The helical transmembrane segment at 269-289 threads the bilayer; it reads YLLWYMLASHITGAFWYMLSV. Over 290 to 395 the chain is Extracellular; it reads ERNDTCWRFA…GQGLQTSTFP (106 aa). Residues 396–416 traverse the membrane as a helical segment; sequence GEVLFSIAIAIAGLLLFALLI. Residues 417–738 lie on the Cytoplasmic side of the membrane; it reads GNMQTYLQSL…KPPEPDFDAE (322 aa). A nucleoside 3',5'-cyclic phosphate-binding positions include 502–632 and Glu-573; that span reads LFAN…TFRF. Positions 618–633 are calmodulin-binding; sequence FRRLHSRQVQQTFRFY. The IQ domain occupies 638–667; sequence RTWASCFIQAAWRRYSRRKNAELRRIEEKE. 2 disordered regions span residues 671-693 and 715-738; these read GYED…SESS and LRSS…FDAE.

Belongs to the cyclic nucleotide-gated cation channel (TC 1.A.1.5) family. As to quaternary structure, homotetramer or heterotetramer.

It is found in the cell membrane. In terms of biological role, putative cyclic nucleotide-gated ion channel. This chain is Putative cyclic nucleotide-gated ion channel 7 (CNGC7), found in Arabidopsis thaliana (Mouse-ear cress).